The primary structure comprises 911 residues: Anoctamin-6 (911 aa).

The Cytoplasmic portion of the chain corresponds to 1–301 (MQMMTRKVLL…YGEKIGIYFA (301 aa)). Residues 302-322 (WLGYYTQMLLLAAVVGVACFL) form a helical membrane-spanning segment. Residues 323–376 (YGYLDQDNCTWSKEVCDPDIGGQILMCPQCDRLCPFWRLNITCESSKKLCIFDS) are Extracellular-facing. Asparagine 330 carries an N-linked (GlcNAc...) asparagine glycan. Cystine bridges form between cysteine 331/cysteine 372, cysteine 338/cysteine 365, cysteine 349/cysteine 807, cysteine 352/cysteine 356, and cysteine 596/cysteine 601. Asparagine 362 is a glycosylation site (N-linked (GlcNAc...) asparagine). The chain crosses the membrane as a helical span at residues 377–397 (FGTLIFAVFMGVWVTLFLEFW). The Cytoplasmic segment spans residues 398–456 (KRRQAELEYEWDTVELQQEEQARPEYEAQCNHVVINEITQEEERIPFTTCGKCIRVTLC). Residues 457–477 (ASAVFFWILLIIASVIGIIVY) traverse the membrane as a helical segment. Over 478–510 (RLSVFIVFSTTLPKNPNGTDPIQKYLTPQMATS) the chain is Extracellular. Residue asparagine 494 is glycosylated (N-linked (GlcNAc...) asparagine). Residues 511 to 531 (ITASIISFIIIMILNTIYEKV) form a helical membrane-spanning segment. Over 532–552 (AIMITNFELPRTQTDYENSLT) the chain is Cytoplasmic. Residues 553–573 (MKMFLFQFVNYYSSCFYIAFF) form a helical membrane-spanning segment. At 574 to 602 (KGKFVGYPGDPVYLLGKYRSEECDPGGCL) the chain is on the extracellular side. Residues 603–622 (LELTTQLTIIMGGKAIWNNI) form a helical membrane-spanning segment. The Cytoplasmic segment spans residues 623-664 (QEVLLPWVMNLIGRYKRVSGSEKITPRWEQDYHLQPMGKLGL). Glutamate 624, glutamate 667, and glutamate 670 together coordinate Ca(2+). The next 2 helical transmembrane spans lie at 665-685 (FYEY…VASF) and 686-706 (PLAP…DAWK). Over 707-723 (LTTQFRRMVPEKAQDIG) the chain is Cytoplasmic. Residues 724–744 (AWQPIMQGIAILAVVTNAMII) traverse the membrane as a helical segment. Topologically, residues 745–837 (AFTSDMIPRL…YWHVIAAKLA (93 aa)) are extracellular. N-linked (GlcNAc...) asparagine glycosylation is found at asparagine 778, asparagine 785, and asparagine 803. The chain crosses the membrane as a helical span at residues 838–858 (FIIVMEHIIYSVKFFISYAIP). The Cytoplasmic segment spans residues 859–911 (DVSKITKSKIKREKYLTQKLLHESHLKDLTKNMGIIAERIGGTVDNSVRPKLE).

The protein belongs to the anoctamin family. As to quaternary structure, homodimer. As to expression, predominant expression seen in epithelial tissues. Also found in skeletal system where it is primarily expressed in osteoblasts.

Its subcellular location is the cell membrane. It catalyses the reaction a 1,2-diacyl-sn-glycero-3-phospho-L-serine(in) = a 1,2-diacyl-sn-glycero-3-phospho-L-serine(out). The catalysed reaction is a beta-D-galactosyl-(1&lt;-&gt;1')-N-acylsphing-4-enine(out) = a beta-D-galactosyl-(1&lt;-&gt;1')-N-acylsphing-4-enine(in). It carries out the reaction a 1,2-diacyl-sn-glycero-3-phosphocholine(in) = a 1,2-diacyl-sn-glycero-3-phosphocholine(out). With respect to regulation, exhibits synergistic gating by Ca(2+) and voltage. Inhibited by some non-specific cation channel blockers such as: ruthenium red, 2-aminoethyl diphenylborinate (2APB), gadolinium and cadmium ions. Its function is as follows. Small-conductance calcium-activated nonselective cation (SCAN) channel which acts as a regulator of phospholipid scrambling in platelets, osteoblasts and fetal thymocytes. Phospholipid scrambling results in surface exposure of phosphatidylserine which in platelets is essential to trigger the clotting system whereas in osteoblasts is essential for the deposition of hydroxyapatite during bone mineralization. Has calcium-dependent phospholipid scramblase activity; scrambles phosphatidylserine, phosphatidylcholine and galactosylceramide. Can generate outwardly rectifying chloride channel currents in airway epithelial cells and Jurkat T lymphocytes. The sequence is that of Anoctamin-6 (Ano6) from Mus musculus (Mouse).